The sequence spans 121 residues: Large ribosomal subunit protein bL19 (121 aa).

The protein belongs to the bacterial ribosomal protein bL19 family.

Its function is as follows. This protein is located at the 30S-50S ribosomal subunit interface and may play a role in the structure and function of the aminoacyl-tRNA binding site. The sequence is that of Large ribosomal subunit protein bL19 from Neisseria gonorrhoeae (strain ATCC 700825 / FA 1090).